Reading from the N-terminus, the 209-residue chain is Ribonuclease HII (209 aa).

Positions 20-209 constitute an RNase H type-2 domain; the sequence is GLVAGVDEAG…VARSLPGACR (190 aa). Positions 26, 27, and 118 each coordinate a divalent metal cation.

The protein belongs to the RNase HII family. It depends on Mn(2+) as a cofactor. Mg(2+) serves as cofactor.

It localises to the cytoplasm. It carries out the reaction Endonucleolytic cleavage to 5'-phosphomonoester.. Endonuclease that specifically degrades the RNA of RNA-DNA hybrids. This Verminephrobacter eiseniae (strain EF01-2) protein is Ribonuclease HII.